A 690-amino-acid chain; its full sequence is Glutamate--cysteine ligase (690 aa).

Low complexity-rich tracts occupy residues 574–585 and 598–619; these read QQQNGHVNNNNN and NGST…TNGT. The tract at residues 574–620 is disordered; the sequence is QQQNGHVNNNNNNDKKTKNDPIIVNGSTTTTNGTNSGSGITETNGTM.

This sequence belongs to the glutamate--cysteine ligase type 3 family.

It carries out the reaction L-cysteine + L-glutamate + ATP = gamma-L-glutamyl-L-cysteine + ADP + phosphate + H(+). It functions in the pathway sulfur metabolism; glutathione biosynthesis; glutathione from L-cysteine and L-glutamate: step 1/2. This is Glutamate--cysteine ligase (GCS1) from Candida albicans (Yeast).